A 331-amino-acid polypeptide reads, in one-letter code: MLPKIAVIGEGVIGCTSALQIAKAIPNSKITIFHDKPFENSCSAGPAGLFRIDYEENTEYGRASFAWFSHLYRTTKGAETGVKLVSGHIQSDNLESLKQQQRAYGDIVYNFRFLDDRERLDIFPSPSKHCIHYTAYASEGNKYVPYLKRLLLEQKVEFQQKNVENLDTIADAGYDVIVNCAGLYGGKLAGDDDQCYPIRGVILEVDAPWHKHFNYRDFTTFTIPKENSVVIGSTKQDNRWDLEITDEDRNDILSRYIELHPGMREPKILKEWSALRPGRKHVRIESQQRKTTETGKEYTVVHHYGHGSNGFTLGWGTAIEATKLVKKALGL.

4 residues coordinate FAD: Asp35, Lys36, Ser43, and Gly307.

The protein belongs to the DAMOX/DASOX family. The cofactor is FAD.

It localises to the cytoplasm. It carries out the reaction D-aspartate + O2 + H2O = oxaloacetate + H2O2 + NH4(+). It catalyses the reaction D-glutamate + O2 + H2O = H2O2 + 2-oxoglutarate + NH4(+). Functionally, selectively catalyzes the oxidative deamination of acidic amino acids. May play a role in the egg-laying events and early development of the worm, in addition to quality control of the germ cells. This is D-aspartate oxidase 2 from Caenorhabditis briggsae.